The following is a 348-amino-acid chain: MARDLIGPALPPGFKERATVEDQERDPSPVAGPALPPNYRSSSSDSSDSNEDSSSLSEEGNQESEEDDAGPTAKKQRRNQDRDDDDDDDGFFGPALPPGFKKQDDSPPRPIIGPALPPGFIKSPQKNDKGRENPGQVSPFFNSEEAESGEDEDIVGPMPAKGPVDYSVTAEFEKRAQRMKEKLTKGDDDSPKPVTRESWMTELPPEMKDFGLGPRTFKRRADDKSGDRSVWTDTPADRERKAKEIQEARKSLSKKDEENMLSGRDKRLAEQVSSYNESKRSESLMDIHHKRLKTKAAEDKNRHQERTPFDRDKDLKVNRFDEAQKKALIKKSRELNTRFSHGKGNMFL.

Disordered regions lie at residues 1–163 (MARD…AKGP) and 177–317 (QRMK…DLKV). At alanine 2 the chain carries N-acetylalanine. The GPALPP motif 1 motif lies at 7 to 12 (GPALPP). Positions 14-27 (FKERATVEDQERDP) are enriched in basic and acidic residues. The residue at position 28 (serine 28) is a Phosphoserine. A GPALPP motif 2 motif is present at residues 32–37 (GPALPP). A compositionally biased stretch (low complexity) spans 41 to 59 (SSSSDSSDSNEDSSSLSEE). A compositionally biased stretch (acidic residues) spans 60–69 (GNQESEEDDA). Positions 93–98 (GPALPP) match the GPALPP motif 3 motif. Serine 106 bears the Phosphoserine mark. A compositionally biased stretch (pro residues) spans 108-117 (PRPIIGPALP). Residues 113–118 (GPALPP) carry the GPALPP motif 4 motif. Serine 138, serine 143, and serine 148 each carry phosphoserine. A compositionally biased stretch (acidic residues) spans 144-154 (EEAESGEDEDI). Basic and acidic residues-rich tracts occupy residues 177–195 (QRMK…KPVT), 235–269 (PADR…KRLA), 277–287 (ESKRSESLMDI), and 295–317 (KAAE…DLKV). Glycyl lysine isopeptide (Lys-Gly) (interchain with G-Cter in SUMO2) cross-links involve residues lysine 279 and lysine 316.

The protein is GPALPP motifs-containing protein 1 (Gpalpp1) of Rattus norvegicus (Rat).